We begin with the raw amino-acid sequence, 517 residues long: Glutamate--cysteine ligase (517 aa).

It belongs to the glutamate--cysteine ligase type 1 family. Type 1 subfamily.

It carries out the reaction L-cysteine + L-glutamate + ATP = gamma-L-glutamyl-L-cysteine + ADP + phosphate + H(+). The protein operates within sulfur metabolism; glutathione biosynthesis; glutathione from L-cysteine and L-glutamate: step 1/2. This is Glutamate--cysteine ligase from Pectobacterium atrosepticum (strain SCRI 1043 / ATCC BAA-672) (Erwinia carotovora subsp. atroseptica).